The primary structure comprises 105 residues: Flagellar transcriptional regulator FlhD (105 aa).

Belongs to the FlhD family. In terms of assembly, homodimer; disulfide-linked. Forms a heterohexamer composed of two FlhC and four FlhD subunits. Each FlhC binds a FlhD dimer, forming a heterotrimer, and a hexamer assembles by dimerization of two heterotrimers.

It localises to the cytoplasm. In terms of biological role, functions in complex with FlhC as a master transcriptional regulator that regulates transcription of several flagellar and non-flagellar operons by binding to their promoter region. Activates expression of class 2 flagellar genes, including fliA, which is a flagellum-specific sigma factor that turns on the class 3 genes. Also regulates genes whose products function in a variety of physiological pathways. This is Flagellar transcriptional regulator FlhD from Ralstonia pickettii (strain 12J).